The primary structure comprises 433 residues: Pyroglutamylated RF-amide peptide receptor (433 aa).

Residues methionine 1–valine 46 are Extracellular-facing. 2 N-linked (GlcNAc...) asparagine glycosylation sites follow: asparagine 5 and asparagine 19. A helical membrane pass occupies residues alanine 47–isoleucine 67. Over tyrosine 68–asparagine 81 the chain is Cytoplasmic. Residues isoleucine 82–threonine 102 traverse the membrane as a helical segment. The Extracellular segment spans residues methionine 103 to methionine 120. A helical membrane pass occupies residues valine 121 to valine 141. At glutamate 142–alanine 162 the chain is on the cytoplasmic side. Residues phenylalanine 163–valine 183 form a helical membrane-spanning segment. The Extracellular segment spans residues glutamine 184–arginine 212. The chain crosses the membrane as a helical span at residues isoleucine 213–leucine 233. At tyrosine 234–alanine 271 the chain is on the cytoplasmic side. Residues valine 272–valine 292 traverse the membrane as a helical segment. Residues histidine 293–valine 313 lie on the Extracellular side of the membrane. Residues phenylalanine 314–phenylalanine 334 form a helical membrane-spanning segment. Residues methionine 335–leucine 433 lie on the Cytoplasmic side of the membrane. The interval serine 356–aspartate 389 is disordered.

This sequence belongs to the G-protein coupled receptor 1 family. As to expression, highly expressed in the adrenal gland and at moderate levels in the eye and testis. Expressed widely in the brain with high levels in the hypothalamus and moderate levels in the amygdala, basal forebrain, cortex, medulla oblongata, midbrain and thalamus.

The protein resides in the cell membrane. Receptor for the orexigenic neuropeptide QRFP. The activity of this receptor is mediated by G proteins that modulate adenylate cyclase activity and intracellular calcium levels. This chain is Pyroglutamylated RF-amide peptide receptor (Qrfpr), found in Rattus norvegicus (Rat).